Consider the following 506-residue polypeptide: NAD(P)H-quinone oxidoreductase subunit 2, chloroplastic (506 aa).

Helical transmembrane passes span 15–35, 39–59, 84–104, 113–133, 137–157, 172–192, 217–237, 249–269, 283–303, 339–359, 382–402, 418–438, and 471–491; these read LIPE…DLVY, CHAW…VLLG, LSLV…LLSI, APSE…LVAG, LLMM…LTGY, LLVG…MYGI, CALA…AAPF, PTPV…ILAV, WHLI…FIAV, IVYL…VILF, ALCL…AGFF, SLVW…LSVV, and VGIF…NSMV.

This sequence belongs to the complex I subunit 2 family. In terms of assembly, NDH is composed of at least 16 different subunits, 5 of which are encoded in the nucleus.

It is found in the plastid. Its subcellular location is the chloroplast thylakoid membrane. The enzyme catalyses a plastoquinone + NADH + (n+1) H(+)(in) = a plastoquinol + NAD(+) + n H(+)(out). It catalyses the reaction a plastoquinone + NADPH + (n+1) H(+)(in) = a plastoquinol + NADP(+) + n H(+)(out). In terms of biological role, NDH shuttles electrons from NAD(P)H:plastoquinone, via FMN and iron-sulfur (Fe-S) centers, to quinones in the photosynthetic chain and possibly in a chloroplast respiratory chain. The immediate electron acceptor for the enzyme in this species is believed to be plastoquinone. Couples the redox reaction to proton translocation, and thus conserves the redox energy in a proton gradient. The sequence is that of NAD(P)H-quinone oxidoreductase subunit 2, chloroplastic from Nephroselmis olivacea (Green alga).